A 230-amino-acid polypeptide reads, in one-letter code: uncharacterized protein (230 aa).

Positions 2–230 (IQLSNVRKSY…ASSGQRSVGE (229 aa)) constitute an ABC transporter domain. 38–45 (GPSGSGKS) is an ATP binding site.

It belongs to the ABC transporter superfamily. As to quaternary structure, part of a complex composed of YknX, YknY and YknZ. The complex interacts with YknW.

The protein resides in the cell membrane. Functionally, part of an unusual four-component transporter, which is required for protection against the killing factor SdpC (sporulation-delaying protein). This is an uncharacterized protein from Bacillus subtilis (strain 168).